The sequence spans 310 residues: ATP phosphoribosyltransferase (310 aa).

The protein belongs to the ATP phosphoribosyltransferase family.

It is found in the cytoplasm. The enzyme catalyses 1-(5-phospho-beta-D-ribosyl)-ATP + diphosphate = 5-phospho-alpha-D-ribose 1-diphosphate + ATP. It participates in amino-acid biosynthesis; L-histidine biosynthesis; L-histidine from 5-phospho-alpha-D-ribose 1-diphosphate: step 1/9. Its function is as follows. Catalyzes the condensation of ATP and 5-phosphoribose 1-diphosphate to form N'-(5'-phosphoribosyl)-ATP (PR-ATP). Has a crucial role in the pathway because the rate of histidine biosynthesis seems to be controlled primarily by regulation of HisG enzymatic activity. In Schizosaccharomyces pombe (strain 972 / ATCC 24843) (Fission yeast), this protein is ATP phosphoribosyltransferase (his1).